The primary structure comprises 171 residues: S-ribosylhomocysteine lyase (171 aa).

Histidine 54, histidine 58, and cysteine 128 together coordinate Fe cation.

The protein belongs to the LuxS family. In terms of assembly, homodimer. Fe cation is required as a cofactor.

The catalysed reaction is S-(5-deoxy-D-ribos-5-yl)-L-homocysteine = (S)-4,5-dihydroxypentane-2,3-dione + L-homocysteine. Its function is as follows. Involved in the synthesis of autoinducer 2 (AI-2) which is secreted by bacteria and is used to communicate both the cell density and the metabolic potential of the environment. The regulation of gene expression in response to changes in cell density is called quorum sensing. Catalyzes the transformation of S-ribosylhomocysteine (RHC) to homocysteine (HC) and 4,5-dihydroxy-2,3-pentadione (DPD). This is S-ribosylhomocysteine lyase from Pectobacterium atrosepticum (strain SCRI 1043 / ATCC BAA-672) (Erwinia carotovora subsp. atroseptica).